Here is a 172-residue protein sequence, read N- to C-terminus: NADH-quinone oxidoreductase subunit B (172 aa).

Cysteine 42, cysteine 43, cysteine 107, and cysteine 136 together coordinate [4Fe-4S] cluster.

It belongs to the complex I 20 kDa subunit family. As to quaternary structure, NDH-1 is composed of 14 different subunits. Subunits NuoB, C, D, E, F, and G constitute the peripheral sector of the complex. The cofactor is [4Fe-4S] cluster.

Its subcellular location is the cell inner membrane. The catalysed reaction is a quinone + NADH + 5 H(+)(in) = a quinol + NAD(+) + 4 H(+)(out). NDH-1 shuttles electrons from NADH, via FMN and iron-sulfur (Fe-S) centers, to quinones in the respiratory chain. The immediate electron acceptor for the enzyme in this species is believed to be ubiquinone. Couples the redox reaction to proton translocation (for every two electrons transferred, four hydrogen ions are translocated across the cytoplasmic membrane), and thus conserves the redox energy in a proton gradient. The sequence is that of NADH-quinone oxidoreductase subunit B from Sulfurovum sp. (strain NBC37-1).